The following is a 2997-amino-acid chain: Chromodomain-helicase-DNA-binding protein 7 (2997 aa).

The interval 86–144 (PNRMMSNTPGNGLASPHSQYHTPPVPQVPHGGSGGGQMGVYPGMQNERHGQSFVDSSSM) is disordered. Polar residues predominate over residues 88 to 106 (RMMSNTPGNGLASPHSQYH). Arg-148 is modified (omega-N-methylarginine). Disordered regions lie at residues 160 to 186 (YQQQ…PQHM), 199 to 287 (SMQQ…AVRP), 375 to 419 (QMNT…GSAG), 498 to 816 (GQQH…KQKE), and 938 to 959 (REPE…SESS). Positions 166-177 (QPQPPQPAPSGP) are enriched in pro residues. Composition is skewed to polar residues over residues 199–224 (SMQQ…NQGN) and 238–255 (VPQQ…SVQQ). Arg-286 bears the Asymmetric dimethylarginine mark. The segment covering 375-390 (QMNTQTMHPSQPQGTY) has biased composition (polar residues). A compositionally biased stretch (low complexity) spans 498 to 510 (GQQHPGQQPSFQQ). Basic and acidic residues predominate over residues 607–620 (VAEDPSKGFGKDDF). Over residues 627 to 636 (QELNRNSLDG) the composition is skewed to polar residues. At Ser-637 the chain carries Phosphoserine. 2 stretches are compositionally biased toward basic and acidic residues: residues 650–682 (KKDP…EPKE) and 717–729 (GKTE…DLDK). Ser-725 is subject to Phosphoserine. The span at 746 to 758 (QKRRSSRQVKRKR) shows a compositional bias: basic residues. Residues 759–769 (YTEDLEFKISD) are compositionally biased toward basic and acidic residues. A compositionally biased stretch (polar residues) spans 782-794 (SPSNTSQSEQQES). 2 Chromo domains span residues 800–867 (PVVE…GQNK) and 882–947 (VEVD…RVER). The Helicase ATP-binding domain maps to 980 to 1154 (LFNWYNMRNC…FSLLHFLEPS (175 aa)). 993–1000 (DEMGLGKT) is an ATP binding site. The DEAH box motif lies at 1105-1108 (DEAH). Residues 1294–1464 (LIDKLLPKLK…LSKKEIEDLL (171 aa)) enclose the Helicase C-terminal domain. Disordered stretches follow at residues 1576–1600 (FSDL…KSQG) and 1837–1863 (DMLA…TRTP). Ser-1577 and Ser-1581 each carry phosphoserine. The segment covering 1584-1596 (EEKPCAKPRRPQD) has biased composition (basic and acidic residues). The span at 1844–1855 (DGGEFDREDEDP) shows a compositional bias: acidic residues. Position 1874 is a phosphoserine (Ser-1874). Composition is skewed to basic and acidic residues over residues 2170-2189 (QAEG…KCEG) and 2198-2207 (GSGKESKQEC). Residues 2170–2290 (QAEGKVEEPE…DETRDGFYME (121 aa)) form a disordered region. A phosphoserine mark is found at Ser-2231, Ser-2233, Ser-2237, Ser-2251, Ser-2272, Ser-2275, Ser-2356, and Ser-2395. Residues 2237–2251 (SEEDEEEKLEDDDKS) show a composition bias toward acidic residues. A coiled-coil region spans residues 2401 to 2431 (RRRRRKIEIEAERAAKRRNLMEMVAQLRESQ). At Thr-2472 the chain carries Phosphothreonine. A phosphoserine mark is found at Ser-2533 and Ser-2535. The residue at position 2551 (Thr-2551) is a Phosphothreonine. Residues Ser-2559 and Ser-2619 each carry the phosphoserine modification. The segment covering 2823-2832 (ATGNTTTASS) has biased composition (low complexity). Disordered regions lie at residues 2823-2872 (ATGN…SANG) and 2935-2997 (EEKA…ENDE). Composition is skewed to basic and acidic residues over residues 2839–2849 (STSKGEEKGNE) and 2935–2951 (EEKA…KDGE). Ser-2956 and Ser-2961 each carry phosphoserine. Over residues 2970-2997 (LLEDEIAQGEELDSLDGGDEIENNENDE) the composition is skewed to acidic residues.

The protein belongs to the SNF2/RAD54 helicase family. May interact with CTCF. Interacts with CHD8. Interacts with FAM124B. Found in a complex composed of AGO2, CHD7 and ARB2A. Interacts with TLK2. In terms of tissue distribution, widely expressed in fetal and adult tissues.

It localises to the nucleus. It is found in the nucleolus. It carries out the reaction ATP + H2O = ADP + phosphate + H(+). ATP-dependent chromatin-remodeling factor, slides nucleosomes along DNA; nucleosome sliding requires ATP. Probable transcription regulator. May be involved in the in 45S precursor rRNA production. This is Chromodomain-helicase-DNA-binding protein 7 (CHD7) from Homo sapiens (Human).